Reading from the N-terminus, the 1368-residue chain is MAP3K epsilon protein kinase 1 (1368 aa).

Residues 20 to 274 (YMLGDEIGKG…AKTLLSHPWI (255 aa)) enclose the Protein kinase domain. 2 HEAT repeats span residues 25-62 (EIGK…EDLN) and 86-125 (SKTK…AVYI). ATP contacts are provided by residues 26–34 (IGKGAYGRV) and Lys49. Asp144 acts as the Proton acceptor in catalysis. One copy of the HEAT 3 repeat lies at 218 to 256 (PYYDLQPMPALFRIVQDDNPPIPDSLSPDITDFLRQCFK). 2 disordered regions span residues 296–415 (EATA…KNTS) and 430–507 (QTSH…PVAD). The segment covering 351-364 (LGEEGTDNSEDDIM) has biased composition (acidic residues). Basic and acidic residues-rich tracts occupy residues 388 to 399 (SDFHGKSERGET) and 470 to 486 (SLHD…EGKP). Positions 488–502 (EASTSMPTSNVNQGD) are enriched in polar residues. HEAT repeat units follow at residues 533–571 (SNDG…LFPL), 628–653 (IPKS…DFQE), 654–695 (NACL…SSPL), 699–737 (MFIA…VFKL), and 750–788 (AAKN…RVRS). Residues 777-883 (GGLDGQAPRV…ISLSANRTST (107 aa)) form a disordered region. Polar residues predominate over residues 791 to 808 (LDPNNPIFGQNETSSLSM). 2 stretches are compositionally biased toward basic and acidic residues: residues 813 to 826 (DVLK…EEPS) and 836 to 852 (SDVH…DKPR). HEAT repeat units lie at residues 903–940 (EQVR…HESR), 1025–1063 (ATSS…ADTT), 1067–1105 (YMCS…DPNC), 1112–1150 (ADAI…INKR), 1154–1191 (QAAE…ASRN), 1196–1234 (LRAH…DNRK), 1258–1281 (RHFV…NKTL), 1282–1318 (AVNG…HHPR), and 1348–1368 (QVLV…NTIL).

Belongs to the protein kinase superfamily. Ser/Thr protein kinase family. Interacts with SGP1. In terms of processing, autophosphorylated. In terms of tissue distribution, expressed in both the sporophytic and the gametophytic tissues, especially in dividing cells. Mostly present in flower buds and mature flowers. Also accumulates in embryos, in roots apices, trichomes and ovule integuments.

The protein resides in the cytoplasm. It is found in the cytoskeleton. It localises to the microtubule organizing center. Its subcellular location is the nucleus. The protein localises to the nucleolus. The protein resides in the cell membrane. The catalysed reaction is L-seryl-[protein] + ATP = O-phospho-L-seryl-[protein] + ADP + H(+). It carries out the reaction L-threonyl-[protein] + ATP = O-phospho-L-threonyl-[protein] + ADP + H(+). In terms of biological role, serine/threonine-protein kinase involved in the spatial and temporal control system organizing cortical activities in mitotic and postmitotic cells. Required for the normal functioning of the plasma membrane in developing pollen. Involved in the regulation of cell expansion, cell elongation, and embryo development. The polypeptide is MAP3K epsilon protein kinase 1 (Arabidopsis thaliana (Mouse-ear cress)).